Here is a 316-residue protein sequence, read N- to C-terminus: Olfactory receptor 52A5 (316 aa).

At 1-27 (MPTFNGSVFMPSAFILIGIPGLESVQC) the chain is on the extracellular side. N-linked (GlcNAc...) asparagine glycosylation is present at asparagine 5. The chain crosses the membrane as a helical span at residues 28–48 (WIGIPFSAMYLIGVIGNSLIL). The Cytoplasmic segment spans residues 49–56 (VIIKYENS). A helical membrane pass occupies residues 57-77 (LHIPMYIFLAMLAATDIALNT). Over 78 to 101 (CILPKMLGIFWFHLPEISFDACLF) the chain is Extracellular. A helical transmembrane segment spans residues 102–122 (QMWLIHSFQAIESGILLAMAL). At 123 to 141 (DRYVAICIPLRHATIFSQQ) the chain is on the cytoplasmic side. Residues 142 to 162 (FLTHIGLGVTLRAAILIIPSL) form a helical membrane-spanning segment. At 163 to 199 (GLIKCCLKHYRTTVISHSYCEHMAIVKLATEDIRVNK) the chain is on the extracellular side. Residues 200–220 (IYGLFVAFAILGFDIIFITLS) traverse the membrane as a helical segment. The Cytoplasmic portion of the chain corresponds to 221-240 (YVQIFITVFQLPQKEARFKA). A helical transmembrane segment spans residues 241-261 (FNTCIAHICVFLQFYLLAFFS). Residues 262–276 (FFTHRFGSHIPPYIH) are Extracellular-facing. The chain crosses the membrane as a helical span at residues 277–297 (ILLSNLYLLVPPFLNPIVYGV). At 298-316 (KTKQIRDHIVKVFFFKKVT) the chain is on the cytoplasmic side.

The protein belongs to the G-protein coupled receptor 1 family.

It localises to the cell membrane. Functionally, odorant receptor. The sequence is that of Olfactory receptor 52A5 (OR52A5) from Homo sapiens (Human).